The following is a 423-amino-acid chain: Major royal jelly protein 9 (423 aa).

A signal peptide spans methionine 1–alanine 20. N-linked (GlcNAc...) asparagine glycans are attached at residues asparagine 110, asparagine 118, asparagine 177, asparagine 196, and asparagine 345.

Belongs to the major royal jelly protein family. Expressed at very low levels in the hypopharyngeal glands of adult worker bees (at protein level); expression peaks at 12 days post eclosion. Secreted into bee venom in the sting apparatus (at protein level). Expressed in the brains of adult worker bees peaking at 12 days post eclosion (at protein level). Expressed in the spermatheca of adult queen bees (at protein level); expression levels are higher in mated queens than in virgin queens. Along with Mrjp8 expressed at very low levels in the head of worker bees compared to other major royal jelly proteins.

It is found in the secreted. Component of bee sting venom. Component of royal jelly, a substance produced in the hypopharyngeal gland containing proteins, free amino acids, fatty acids, sugars and other nutrients, which is fed to developing larvae by worker nurse bees; may be present only at trace levels. All larvae are fed some royal jelly (also known as worker jelly) early in their development but it forms the principal source of nutrition for larvae destined to become queen bees. Produced in the spermatheca of adult queen bees, along with other major royal jelly proteins, where it may act as a nutrient supply for sperm stored by mated queens, or be involved in energy metabolism. This is Major royal jelly protein 9 from Apis mellifera (Honeybee).